We begin with the raw amino-acid sequence, 203 residues long: Imidazoleglycerol-phosphate dehydratase (203 aa).

It belongs to the imidazoleglycerol-phosphate dehydratase family.

It localises to the cytoplasm. It carries out the reaction D-erythro-1-(imidazol-4-yl)glycerol 3-phosphate = 3-(imidazol-4-yl)-2-oxopropyl phosphate + H2O. It functions in the pathway amino-acid biosynthesis; L-histidine biosynthesis; L-histidine from 5-phospho-alpha-D-ribose 1-diphosphate: step 6/9. The protein is Imidazoleglycerol-phosphate dehydratase of Salinispora arenicola (strain CNS-205).